The chain runs to 88 residues: Elongation factor 1-beta (88 aa).

Belongs to the EF-1-beta/EF-1-delta family.

Its function is as follows. Promotes the exchange of GDP for GTP in EF-1-alpha/GDP, thus allowing the regeneration of EF-1-alpha/GTP that could then be used to form the ternary complex EF-1-alpha/GTP/AAtRNA. The sequence is that of Elongation factor 1-beta from Haloarcula marismortui (strain ATCC 43049 / DSM 3752 / JCM 8966 / VKM B-1809) (Halobacterium marismortui).